Reading from the N-terminus, the 104-residue chain is NADH-quinone oxidoreductase subunit K (104 aa).

The next 3 helical transmembrane spans lie at 4 to 24, 31 to 51, and 67 to 87; these read VPAS…LFGA, VIVL…LVAF, and LFTM…LIAL.

Belongs to the complex I subunit 4L family. As to quaternary structure, NDH-1 is composed of 14 different subunits. Subunits NuoA, H, J, K, L, M, N constitute the membrane sector of the complex.

Its subcellular location is the cell membrane. The enzyme catalyses a quinone + NADH + 5 H(+)(in) = a quinol + NAD(+) + 4 H(+)(out). Functionally, NDH-1 shuttles electrons from NADH, via FMN and iron-sulfur (Fe-S) centers, to quinones in the respiratory chain. The immediate electron acceptor for the enzyme in this species is believed to be a menaquinone. Couples the redox reaction to proton translocation (for every two electrons transferred, four hydrogen ions are translocated across the cytoplasmic membrane), and thus conserves the redox energy in a proton gradient. The sequence is that of NADH-quinone oxidoreductase subunit K from Bacillus mycoides (strain KBAB4) (Bacillus weihenstephanensis).